A 108-amino-acid polypeptide reads, in one-letter code: Replication initiation control protein YabA (108 aa).

Histidine 83, cysteine 85, cysteine 99, and cysteine 102 together coordinate Zn(2+).

It belongs to the YabA family. In terms of assembly, homotetramer. Interacts with both DnaA and DnaN, acting as a bridge between these two proteins. Requires Zn(2+) as cofactor.

The protein resides in the cytoplasm. Its subcellular location is the nucleoid. Involved in control of chromosome replication initiation. Inhibits the cooperative binding of DnaA to the oriC region, thus negatively regulating initiation of chromosome replication. Inhibits the ability of DnaA-ATP to form a helix on DNA; does not disassemble preformed DnaA-DNA helices. Decreases the residence time of DnaA on the chromosome at its binding sites (oriC, replication forks and promoter-binding sites). Tethers DnaA to the replication machinery via the DNA polymerase beta sliding clamp subunit (dnaN). Associates with oriC and other DnaA targets on the chromosome in a DnaA-dependent manner. The sequence is that of Replication initiation control protein YabA from Lactococcus lactis subsp. lactis (strain IL1403) (Streptococcus lactis).